Reading from the N-terminus, the 311-residue chain is MLEVIFLGTGGIMPNRERNVPAIALRYKGEIILFDVGEGTMRQMSTAKLSPMKVEKIFITHFHGDHYLGLAALIQTMNLWNREKPLHIYGPKYTFRFIQNFLNSGFFRPGFDIHVHEIGEVRLKFGDYEIWSFKVEHGIPALGYVFKEKDKRGKFLPEKLAEYGLSEGPILGKLEKQGQIEWNGRIIRLEDVTGPRRKGVKVVYTGDTEPCERTRLFAENADLLIHEATYLRPEDRGDSYHTTVGEACEIAKKAKVKLLALFHRAFRYTYDEYMAKARELCDVPFVIPKDFDVLTFKSGRWEMRNLLEDWQ.

Zn(2+) contacts are provided by histidine 61, histidine 63, aspartate 65, histidine 66, histidine 137, aspartate 207, and histidine 263. Aspartate 65 functions as the Proton acceptor in the catalytic mechanism.

It belongs to the RNase Z family. As to quaternary structure, homodimer. Zn(2+) is required as a cofactor.

It catalyses the reaction Endonucleolytic cleavage of RNA, removing extra 3' nucleotides from tRNA precursor, generating 3' termini of tRNAs. A 3'-hydroxy group is left at the tRNA terminus and a 5'-phosphoryl group is left at the trailer molecule.. Zinc phosphodiesterase, which displays some tRNA 3'-processing endonuclease activity. Probably involved in tRNA maturation, by removing a 3'-trailer from precursor tRNA. The sequence is that of Ribonuclease Z from Thermococcus onnurineus (strain NA1).